Reading from the N-terminus, the 434-residue chain is ATP-dependent protease ATPase subunit HslU (434 aa).

Residues Val18, Gly60 to Glu65, Asp247, Glu312, and Arg384 each bind ATP.

This sequence belongs to the ClpX chaperone family. HslU subfamily. A double ring-shaped homohexamer of HslV is capped on each side by a ring-shaped HslU homohexamer. The assembly of the HslU/HslV complex is dependent on binding of ATP.

It is found in the cytoplasm. ATPase subunit of a proteasome-like degradation complex; this subunit has chaperone activity. The binding of ATP and its subsequent hydrolysis by HslU are essential for unfolding of protein substrates subsequently hydrolyzed by HslV. HslU recognizes the N-terminal part of its protein substrates and unfolds these before they are guided to HslV for hydrolysis. This Bradyrhizobium sp. (strain ORS 278) protein is ATP-dependent protease ATPase subunit HslU.